Reading from the N-terminus, the 235-residue chain is MHYERILLKLSGEALMGNRQYGIDPERLAEYAAEIKSVVDKGVEVAIVIGGGNIFRGVAGASRGMDRVQGDHMGMLATVINGLALQSALEDANIQTRLQSAIKINEVAEPFIRRKAIRHLEKGRVVIFGGGTGNPYFTTDSAAVLRAIEIKADVILKGTRVDGIYTSDPEKNKEATKFDFITFEDVIKKGLKVMDTTAFTLSQENELPIIVFDMNKPGNLLKVATGERVGTKVNL.

Residue 9–12 coordinates ATP; that stretch reads KLSG. G51 is a UMP binding site. Residues G52 and R56 each coordinate ATP. UMP-binding positions include D71 and 132 to 139; that span reads TGNPYFTT. The ATP site is built by T159, Y165, and D168.

This sequence belongs to the UMP kinase family. As to quaternary structure, homohexamer.

It is found in the cytoplasm. The enzyme catalyses UMP + ATP = UDP + ADP. Its pathway is pyrimidine metabolism; CTP biosynthesis via de novo pathway; UDP from UMP (UMPK route): step 1/1. With respect to regulation, inhibited by UTP. Catalyzes the reversible phosphorylation of UMP to UDP. The polypeptide is Uridylate kinase (Christiangramia forsetii (strain DSM 17595 / CGMCC 1.15422 / KT0803) (Gramella forsetii)).